We begin with the raw amino-acid sequence, 247 residues long: ATP synthase subunit a, chloroplastic (247 aa).

5 helical membrane-spanning segments follow: residues Gln38–Val58, Val95–Leu115, Ile134–Thr154, Leu199–Leu219, and Gly220–Gly240.

The protein belongs to the ATPase A chain family. As to quaternary structure, F-type ATPases have 2 components, CF(1) - the catalytic core - and CF(0) - the membrane proton channel. CF(1) has five subunits: alpha(3), beta(3), gamma(1), delta(1), epsilon(1). CF(0) has four main subunits: a, b, b' and c.

The protein resides in the plastid. It is found in the chloroplast thylakoid membrane. Key component of the proton channel; it plays a direct role in the translocation of protons across the membrane. This Spinacia oleracea (Spinach) protein is ATP synthase subunit a, chloroplastic (atpI).